Consider the following 332-residue polypeptide: Homoserine kinase (332 aa).

The protein belongs to the pseudomonas-type ThrB family.

It catalyses the reaction L-homoserine + ATP = O-phospho-L-homoserine + ADP + H(+). Its pathway is amino-acid biosynthesis; L-threonine biosynthesis; L-threonine from L-aspartate: step 4/5. This is Homoserine kinase from Burkholderia multivorans (strain ATCC 17616 / 249).